A 468-amino-acid polypeptide reads, in one-letter code: UDP-N-acetylmuramate--L-alanine ligase (468 aa).

118–124 (GTHGKTT) is a binding site for ATP.

It belongs to the MurCDEF family.

It localises to the cytoplasm. It catalyses the reaction UDP-N-acetyl-alpha-D-muramate + L-alanine + ATP = UDP-N-acetyl-alpha-D-muramoyl-L-alanine + ADP + phosphate + H(+). Its pathway is cell wall biogenesis; peptidoglycan biosynthesis. Functionally, cell wall formation. This Roseobacter denitrificans (strain ATCC 33942 / OCh 114) (Erythrobacter sp. (strain OCh 114)) protein is UDP-N-acetylmuramate--L-alanine ligase.